A 281-amino-acid polypeptide reads, in one-letter code: UPF0162 protein PD_0709 (281 aa).

TPR repeat units follow at residues 193 to 226 and 227 to 260; these read VRIL…VPNQ and PEAL…YPST.

This sequence belongs to the UPF0162 family.

This chain is UPF0162 protein PD_0709, found in Xylella fastidiosa (strain Temecula1 / ATCC 700964).